Consider the following 452-residue polypeptide: uncharacterized protein (452 aa).

14 consecutive transmembrane segments (helical) span residues 8–28 (AVFL…SSMI), 39–59 (FHLS…ASAV), 77–97 (FLFG…APTF), 100–122 (LLVM…VGLI), 134–156 (LAVL…GFLI), 161–183 (WPAI…LYMF), 203–222 (LGIV…LLSF), 226–243 (PHAV…AFVW), 266–286 (AVYV…FGLP), 302–322 (LFML…GKWI), 330–350 (PIFA…IFFI), 359–379 (LILS…QAAM), 393–415 (GLFQ…ILFG), and 425–447 (MMGI…FAAL).

It belongs to the major facilitator superfamily.

It localises to the cell membrane. This is an uncharacterized protein from Bacillus subtilis (strain 168).